We begin with the raw amino-acid sequence, 398 residues long: 8-amino-7-oxononanoate synthase (398 aa).

A substrate-binding site is contributed by Arg26. A pyridoxal 5'-phosphate-binding site is contributed by 113–114 (GF). His138 contributes to the substrate binding site. Residues Ser181, His209, and Thr238 each coordinate pyridoxal 5'-phosphate. Lys241 is modified (N6-(pyridoxal phosphate)lysine). Thr355 contributes to the substrate binding site.

Belongs to the class-II pyridoxal-phosphate-dependent aminotransferase family. BioF subfamily. Homodimer. It depends on pyridoxal 5'-phosphate as a cofactor.

It carries out the reaction 6-carboxyhexanoyl-[ACP] + L-alanine + H(+) = (8S)-8-amino-7-oxononanoate + holo-[ACP] + CO2. It participates in cofactor biosynthesis; biotin biosynthesis. Functionally, catalyzes the decarboxylative condensation of pimeloyl-[acyl-carrier protein] and L-alanine to produce 8-amino-7-oxononanoate (AON), [acyl-carrier protein], and carbon dioxide. The protein is 8-amino-7-oxononanoate synthase of Aeromonas hydrophila subsp. hydrophila (strain ATCC 7966 / DSM 30187 / BCRC 13018 / CCUG 14551 / JCM 1027 / KCTC 2358 / NCIMB 9240 / NCTC 8049).